A 711-amino-acid polypeptide reads, in one-letter code: BCLAF1 and THRAP3 family member 3 (711 aa).

Residues 1–15 show a composition bias toward basic residues; that stretch reads MARSRSRSPRWKHRS. 2 disordered regions span residues 1-42 and 48-67; these read MARS…YRKD and AWRM…PSRG. Phosphoserine occurs at positions 15 and 17. The span at 48 to 57 shows a compositional bias: basic and acidic residues; sequence AWRMDSEKHG. Serine 78, serine 80, and serine 187 each carry phosphoserine. 2 disordered regions span residues 94–350 and 371–404; these read KPHR…KDSI and EKIK…PSPI. Composition is skewed to basic and acidic residues over residues 163-197, 204-213, 220-242, 296-311, 318-349, and 371-383; these read FRFE…DFET, RYPEDRDFRK, RPKD…KPEH, SDGR…DRKY, LNRE…KKDS, and EKIK…RKES. Residue lysine 400 forms a Glycyl lysine isopeptide (Lys-Gly) (interchain with G-Cter in SUMO2) linkage. Residues serine 402 and serine 578 each carry the phosphoserine modification.

It belongs to the BCLAF1/THRAP3 family.

It localises to the mitochondrion. In Homo sapiens (Human), this protein is BCLAF1 and THRAP3 family member 3.